A 1224-amino-acid polypeptide reads, in one-letter code: Serine/threonine-protein kinase CST20 (1224 aa).

Positions 1-18 (MSILSENNPTPTSITDPN) are enriched in polar residues. Disordered regions lie at residues 1–378 (MSIL…TAHN) and 403–464 (TNSS…HSQE). Composition is skewed to low complexity over residues 57–70 (NTTS…SLGS) and 95–119 (DSGS…NPES). The span at 144-155 (HQGDDSDNEKQY) shows a compositional bias: basic and acidic residues. Polar residues-rich tracts occupy residues 169–191 (DSYS…NNVS), 201–218 (TSSL…NENA), and 231–240 (PTSKTSSFHD). Residues 242–251 (SSVISSSTSV) show a composition bias toward low complexity. Polar residues-rich tracts occupy residues 256-271 (SNPT…SYKS) and 305-324 (DTLS…TLQG). Low complexity-rich tracts occupy residues 343–375 (NTSA…STST) and 433–462 (KVRG…NSHS). The CRIB domain maps to 469–482 (ISTPFNAKHLAHVG). Disordered stretches follow at residues 539 to 825 (FHFD…ALAD) and 861 to 913 (LREK…KQAA). Polar residues predominate over residues 544-555 (NKSSSSGWSNEN). Residues 564-575 (SNSGSGSGGGGA) show a composition bias toward gly residues. Residues 598-607 (ITPSQSMPTK) show a composition bias toward polar residues. Residues 608-622 (TESKQSENQHPHEDN) are compositionally biased toward basic and acidic residues. Positions 623–636 (ATQYTPRTPTSHVQ) are enriched in polar residues. Composition is skewed to low complexity over residues 664–677 (PSSQ…SQSD), 690–704 (SPSK…SKSL), and 730–743 (SIPK…SLSS). A compositionally biased stretch (polar residues) spans 744–755 (QLRPATNGSTTA). Pro residues predominate over residues 783 to 801 (APPPPPSAPPAPPVPPAPP). A compositionally biased stretch (polar residues) spans 805–820 (LSEQTSEIPQQRTAPS). Over residues 861 to 870 (LREKNERQNR) the composition is skewed to basic and acidic residues. Residues 871 to 886 (QQETGQNNADTASGGS) are compositionally biased toward polar residues. The Protein kinase domain occupies 947–1199 (YVDLVKIGQG…ADELLHDNFI (253 aa)). Residues 953–961 (IGQGASGGV) and K977 each bind ATP. The Proton acceptor role is filled by D1067.

This sequence belongs to the protein kinase superfamily. STE Ser/Thr protein kinase family. STE20 subfamily.

It localises to the cytoplasm. The protein resides in the nucleus. It catalyses the reaction L-seryl-[protein] + ATP = O-phospho-L-seryl-[protein] + ADP + H(+). It carries out the reaction L-threonyl-[protein] + ATP = O-phospho-L-threonyl-[protein] + ADP + H(+). In terms of biological role, MAP4K component of the MAPK pathway required for the mating pheromone response, and the regulation of cell polarity and cell cycle. Phosphorylates histone H2B to form H2BS10ph. Required for hyphal formation and virulence. This chain is Serine/threonine-protein kinase CST20 (CST20), found in Candida albicans (strain WO-1) (Yeast).